The chain runs to 188 residues: Elongation factor P (188 aa).

K34 bears the N6-(3,6-diaminohexanoyl)-5-hydroxylysine mark.

The protein belongs to the elongation factor P family. In terms of processing, may be beta-lysylated on the epsilon-amino group of Lys-34 by the combined action of EpmA and EpmB, and then hydroxylated on the C5 position of the same residue by EpmC (if this protein is present). Lysylation is critical for the stimulatory effect of EF-P on peptide-bond formation. The lysylation moiety may extend toward the peptidyltransferase center and stabilize the terminal 3-CCA end of the tRNA. Hydroxylation of the C5 position on Lys-34 may allow additional potential stabilizing hydrogen-bond interactions with the P-tRNA.

The protein localises to the cytoplasm. Its pathway is protein biosynthesis; polypeptide chain elongation. Involved in peptide bond synthesis. Alleviates ribosome stalling that occurs when 3 or more consecutive Pro residues or the sequence PPG is present in a protein, possibly by augmenting the peptidyl transferase activity of the ribosome. Modification of Lys-34 is required for alleviation. The chain is Elongation factor P from Histophilus somni (strain 129Pt) (Haemophilus somnus).